The sequence spans 466 residues: Methylenomycin A resistance protein (466 aa).

Helical transmembrane passes span 16 to 36, 56 to 76, 83 to 103, 113 to 133, 146 to 166, 168 to 188, 203 to 223, 234 to 254, 276 to 296, 305 to 325, 337 to 357, 367 to 387, 409 to 429, and 434 to 454; these read ISVL…VTVV, WVVD…GALA, TIYI…AASI, LIQG…LAAS, LWAA…GVLV, LAGW…ALIS, VNII…YALI, VILV…LREI, FIGF…SLFL, FMAG…NLLF, LMFV…VLIS, VLMS…TTVI, IGAL…ATWY, and FAFL…WLFL.

Belongs to the major facilitator superfamily. EmrB family.

The protein resides in the cell membrane. Resistance to the epoxide antibiotic methylenomycin. This chain is Methylenomycin A resistance protein (mmr), found in Bacillus subtilis (strain 168).